The primary structure comprises 488 residues: MPKVKALQCALALEISSVTCPGVVLKDKEDIYLSICVFGQYKKTQCVPATFPLVFNARMVFEKVFPDAVDPGDVVTQLEYDTAVFELIQLVPPVGETLSTYDENTRDFMFPGPNQMSGHHDSNRQVTMRRISGLRGNAPRLEFSTTSVITECLISSRKCHTQDKFIYHLAPVEKSHGRLQNRTSRSQKKKSKSPERSKYCINAKNYEQPTISSKSHSPSPYTKRRMCELSEDTRRRLAHLNLGPYEFKKETDKPPFVIRHVDPPSPRADTLLGSSGRDCERDGWSRVHNDHSHLGCCRPKDYKVIRTPHGRDFDDSLEKCEEYLSPRSCSKPRHSARTLLVHSAPSTMPKHSPSPVLNRASLRERFHSDWCSPSNCDEIHDRVKNVLKSHQAHQRHLYDERDLEKDDELELKRSLLCRDSAYDSDPEYSSCQQPRGTFHLDDGEYWSNRAASYKGKSHRPIFENSMDKMYRNLYKKACSSASHTQESF.

Positions 1 to 20 are cleaved as a signal peptide; sequence MPKVKALQCALALEISSVTC. Residues 176-199 form a disordered region; sequence HGRLQNRTSRSQKKKSKSPERSKY. A glycan (N-linked (GlcNAc...) asparagine) is linked at Asn181. Residues Ser217 and Ser219 each carry the phosphoserine modification. Lys248 participates in a covalent cross-link: Glycyl lysine isopeptide (Lys-Gly) (interchain with G-Cter in SUMO2). Residues 256–275 are disordered; that stretch reads FVIRHVDPPSPRADTLLGSS. Phosphoserine occurs at positions 265, 274, 325, 343, 346, 354, 424, 465, and 487.

Belongs to the SPATA6 family. Interacts with MYL6.

Its subcellular location is the secreted. It is found in the cell projection. It localises to the cilium. The protein localises to the flagellum. Functionally, required for formation of the sperm connecting piece during spermiogenesis. Sperm connecting piece is essential for linking the developing flagellum to the head during late spermiogenesis. May be involved in myosin-based microfilament transport through interaction with myosin subunits. This chain is Spermatogenesis-associated protein 6 (SPATA6), found in Homo sapiens (Human).